The chain runs to 227 residues: Ribonuclease 3 (227 aa).

The RNase III domain occupies 6–128 (ASDYQQRIGY…VIAAIYLDAD (123 aa)). Glu41 is a Mg(2+) binding site. Residue Asp45 is part of the active site. Residues Asp114 and Glu117 each contribute to the Mg(2+) site. Glu117 is an active-site residue. Positions 155–225 (DPKTRLQEWL…ASHAIDQLDS (71 aa)) constitute a DRBM domain. The span at 203 to 212 (GEGSSRRLAE) shows a compositional bias: basic and acidic residues. The tract at residues 203-227 (GEGSSRRLAEQDAASHAIDQLDSNK) is disordered.

Belongs to the ribonuclease III family. In terms of assembly, homodimer. It depends on Mg(2+) as a cofactor.

It is found in the cytoplasm. It catalyses the reaction Endonucleolytic cleavage to 5'-phosphomonoester.. In terms of biological role, digests double-stranded RNA. Involved in the processing of primary rRNA transcript to yield the immediate precursors to the large and small rRNAs (23S and 16S). Processes some mRNAs, and tRNAs when they are encoded in the rRNA operon. Processes pre-crRNA and tracrRNA of type II CRISPR loci if present in the organism. The polypeptide is Ribonuclease 3 (Xylella fastidiosa (strain 9a5c)).